Here is a 443-residue protein sequence, read N- to C-terminus: Trigger factor (443 aa).

The region spanning 168–254 (GDFVTIDFEG…IKNLKEKKLP (87 aa)) is the PPIase FKBP-type domain.

Belongs to the FKBP-type PPIase family. Tig subfamily.

The protein resides in the cytoplasm. The catalysed reaction is [protein]-peptidylproline (omega=180) = [protein]-peptidylproline (omega=0). In terms of biological role, involved in protein export. Acts as a chaperone by maintaining the newly synthesized protein in an open conformation. Functions as a peptidyl-prolyl cis-trans isomerase. The sequence is that of Trigger factor from Syntrophus aciditrophicus (strain SB).